Consider the following 510-residue polypeptide: Histidine ammonia-lyase (510 aa).

Residues 143-145 (ASG) constitute a cross-link (5-imidazolinone (Ala-Gly)). Ser144 is modified (2,3-didehydroalanine (Ser)).

Belongs to the PAL/histidase family. In terms of processing, contains an active site 4-methylidene-imidazol-5-one (MIO), which is formed autocatalytically by cyclization and dehydration of residues Ala-Ser-Gly.

It localises to the cytoplasm. It catalyses the reaction L-histidine = trans-urocanate + NH4(+). The protein operates within amino-acid degradation; L-histidine degradation into L-glutamate; N-formimidoyl-L-glutamate from L-histidine: step 1/3. The protein is Histidine ammonia-lyase of Yersinia pestis.